We begin with the raw amino-acid sequence, 199 residues long: Ubiquitin-conjugating enzyme E2-22 kDa (199 aa).

Residues 4–154 (MAVSRIKREF…AKHWTNAYAG (151 aa)) form the UBC core domain. The Glycyl thioester intermediate role is filled by Cys-92. The UBA domain maps to 161 to 199 (DCDSKIQRLRDMGIDEHEARAVLSKENWNLEKATEGLFS).

The protein belongs to the ubiquitin-conjugating enzyme family. Interacts with Rpn10. As to expression, during gastrulation, expression is highest in the invaginating posterior midgut primordium (PMG), high expression is also observed in the cephalic furrow and ventral ectodermal neurogenic region. In stage 10-11 embryos, expression is high in the pole cells present in the pocket formed by the PMG. During germ band retraction, expression appears to reinitiate in many tissues, especially the gut and nervous system. After dorsal closure, expression is detectable at low levels throughout the embryo.

It carries out the reaction S-ubiquitinyl-[E1 ubiquitin-activating enzyme]-L-cysteine + [E2 ubiquitin-conjugating enzyme]-L-cysteine = [E1 ubiquitin-activating enzyme]-L-cysteine + S-ubiquitinyl-[E2 ubiquitin-conjugating enzyme]-L-cysteine.. It participates in protein modification; protein ubiquitination. Its function is as follows. Catalyzes the covalent attachment of ubiquitin to other proteins. This Drosophila melanogaster (Fruit fly) protein is Ubiquitin-conjugating enzyme E2-22 kDa.